A 394-amino-acid chain; its full sequence is MHHPVILLLCLSSLAGAANLPPEDLSQPVTADVIVPTGGTAILKCTVQEHLESSLQWSNTAQQTLYFGEKRALRDNRIQLVHSSPNELTISISNVVLSDEGEYTCSIFTMPVRTAKAVVTVLGVPQKPQVSGFESAFKENDKAKLRCTTSGSKPAANIKWYKGPEELEGAKTSVLEDGNGKTFTVKSFIEFDVTKDDDGAEITCAVGHESLHDSAKSSSHKIQVQYKPTAKIESRPSMPREGDKLRLQCDAYGNPVPDNYVWERENGEVPLLANIEGNSLVFFNLNKTDSGTYTCKASNTLGTFITHYKLDVNDPSPIPSTSSIDHAVIGGVVAVIAFLLFCLLIVLGRYLIRHKGTYLTHEAKGSDDAPDADTAIINAEGGQGGSDDKKEYFI.

Positions 1 to 17 are cleaved as a signal peptide; sequence MHHPVILLLCLSSLAGA. The Extracellular portion of the chain corresponds to 18–326; sequence ANLPPEDLSQ…PIPSTSSIDH (309 aa). Residues 22 to 120 form the Ig-like V-type domain; it reads PEDLSQPVTA…PVRTAKAVVT (99 aa). Intrachain disulfides connect C45/C105 and C147/C204. 2 Ig-like C2-type domains span residues 128–223 and 228–306; these read PQVS…HKIQ and PTAK…TFIT. A disordered region spans residues 217–240; sequence SSSHKIQVQYKPTAKIESRPSMPR. Basic and acidic residues predominate over residues 230–240; it reads AKIESRPSMPR. A disulfide bond links C249 and C295. Residues 327–347 traverse the membrane as a helical segment; the sequence is AVIGGVVAVIAFLLFCLLIVL. Residues 348 to 394 are Cytoplasmic-facing; that stretch reads GRYLIRHKGTYLTHEAKGSDDAPDADTAIINAEGGQGGSDDKKEYFI. Residues 363–394 are disordered; the sequence is AKGSDDAPDADTAIINAEGGQGGSDDKKEYFI.

The protein belongs to the nectin family.

It is found in the cell membrane. The protein resides in the cell junction. In terms of biological role, may be involved in cell-cell adhesion. The chain is Cell adhesion molecule 3 (cadm3) from Xenopus laevis (African clawed frog).